A 573-amino-acid polypeptide reads, in one-letter code: 2-succinyl-5-enolpyruvyl-6-hydroxy-3-cyclohexene-1-carboxylate synthase (573 aa).

The protein belongs to the TPP enzyme family. MenD subfamily. In terms of assembly, homodimer. It depends on Mg(2+) as a cofactor. Mn(2+) is required as a cofactor. Requires thiamine diphosphate as cofactor.

It catalyses the reaction isochorismate + 2-oxoglutarate + H(+) = 5-enolpyruvoyl-6-hydroxy-2-succinyl-cyclohex-3-ene-1-carboxylate + CO2. It functions in the pathway quinol/quinone metabolism; 1,4-dihydroxy-2-naphthoate biosynthesis; 1,4-dihydroxy-2-naphthoate from chorismate: step 2/7. Its pathway is quinol/quinone metabolism; menaquinone biosynthesis. Functionally, catalyzes the thiamine diphosphate-dependent decarboxylation of 2-oxoglutarate and the subsequent addition of the resulting succinic semialdehyde-thiamine pyrophosphate anion to isochorismate to yield 2-succinyl-5-enolpyruvyl-6-hydroxy-3-cyclohexene-1-carboxylate (SEPHCHC). The sequence is that of 2-succinyl-5-enolpyruvyl-6-hydroxy-3-cyclohexene-1-carboxylate synthase from Shewanella baltica (strain OS155 / ATCC BAA-1091).